The following is a 193-amino-acid chain: dCTP deaminase, dUMP-forming (193 aa).

Residues 101–106 (KSSLGR), Asp-119, 127–129 (TLE), Gln-148, Tyr-162, and Gln-174 each bind dCTP. The Proton donor/acceptor role is filled by Glu-129. Residues 160 to 193 (TPYGSGSLGSKYQGQRGPTPSKGYLNFSSEQDSD) are disordered. Over residues 167–177 (LGSKYQGQRGP) the composition is skewed to polar residues.

It belongs to the dCTP deaminase family. As to quaternary structure, homotrimer.

It catalyses the reaction dCTP + 2 H2O = dUMP + NH4(+) + diphosphate. It participates in pyrimidine metabolism; dUMP biosynthesis; dUMP from dCTP: step 1/1. In terms of biological role, bifunctional enzyme that catalyzes both the deamination of dCTP to dUTP and the hydrolysis of dUTP to dUMP without releasing the toxic dUTP intermediate. In Corynebacterium efficiens (strain DSM 44549 / YS-314 / AJ 12310 / JCM 11189 / NBRC 100395), this protein is dCTP deaminase, dUMP-forming.